The following is a 601-amino-acid chain: Elongation factor 4 (601 aa).

Residues 7–189 (RNIRNFSIIA…AIVHRIPPPK (183 aa)) enclose the tr-type G domain. GTP is bound by residues 19–24 (DHGKST) and 136–139 (NKID).

It belongs to the TRAFAC class translation factor GTPase superfamily. Classic translation factor GTPase family. LepA subfamily.

The protein localises to the cell inner membrane. The enzyme catalyses GTP + H2O = GDP + phosphate + H(+). Functionally, required for accurate and efficient protein synthesis under certain stress conditions. May act as a fidelity factor of the translation reaction, by catalyzing a one-codon backward translocation of tRNAs on improperly translocated ribosomes. Back-translocation proceeds from a post-translocation (POST) complex to a pre-translocation (PRE) complex, thus giving elongation factor G a second chance to translocate the tRNAs correctly. Binds to ribosomes in a GTP-dependent manner. This is Elongation factor 4 from Xanthomonas campestris pv. campestris (strain ATCC 33913 / DSM 3586 / NCPPB 528 / LMG 568 / P 25).